A 374-amino-acid chain; its full sequence is MAYLERASPTLKETLLKIYRAEKPIEVDQHFHEFGSIEYHIKYSVSDPNIVHVSTSTLLETQGAVTLKEISSYTYEVIKNIGVGVIDIVDPPRLGFQLTLGLNLDNIPRGKEAIKIITRISELQAIILSSQLKEMLRSLNFQDDSRSINNMPIRIVYHPSEPFYVFKQPEKITAVFPMNFKDNSDVVIATSFFQELVEVGSQKDMGKAPQCSWSPIPPLQLRGEPVQDLTTNSGFVSFDITSRHIEGKRLDKTVWNLLNFYACAKYHIKCSRGYIQRRMRKRMETLVKLLNNTSLEEEAAQNENGRCKYVKEFVKVPKGKLMMKQRCKEMTRRVKISKFRIKINGCARFRFNQRWISLPKFSSKPSDKSYTKLD.

The protein belongs to the ARPC2 family. In terms of assembly, component of the Arp2/3 complex composed of ARP2, ARP3, ARPC1/p41-ARC, ARPC2/p34-ARC, ARPC3/p21-ARC, ARPC4/p20-ARC and ARPC5/p16-ARC. Expressed at low levels in all tissues with a relatively highest expression in inflorescences.

It localises to the cytoplasm. The protein resides in the cytoskeleton. It is found in the cell projection. In terms of biological role, functions as actin-binding component of the Arp2/3 complex which is involved in regulation of actin polymerization and together with an activating nucleation-promoting factor (NPF) mediates the formation of branched actin networks. Seems to contact the mother actin filament. Arp2/3 complex plays a critical role in the control of cell morphogenesis via the modulation of cell polarity development. In Arabidopsis thaliana (Mouse-ear cress), this protein is Actin-related protein 2/3 complex subunit 2B (ARPC2B).